The sequence spans 389 residues: Pyruvate dehydrogenase E1 component subunit alpha, somatic form, mitochondrial (389 aa).

The transit peptide at Gly-1–Thr-28 directs the protein to the mitochondrion. Lys-62 is subject to N6-acetyllysine; alternate. N6-succinyllysine; alternate is present on Lys-62. The pyruvate site is built by His-91, Tyr-117, Arg-118, Ala-156, Gly-164, Val-166, Asp-195, Gly-196, Ala-197, Asn-224, and Tyr-226. Positions 117 and 118 each coordinate thiamine diphosphate. Gly-164, Val-166, Asp-195, Gly-196, Ala-197, and Asn-224 together coordinate thiamine diphosphate. Residue Asp-195 participates in Mg(2+) binding. Mg(2+)-binding residues include Asn-224 and Tyr-226. Ser-231 is subject to Phosphoserine; by PDK1. N6-acetyllysine; alternate is present on Lys-243. Lys-243 bears the N6-succinyllysine; alternate mark. Lys-276 is subject to N6-succinyllysine. His-291 contacts thiamine diphosphate. Ser-292 is modified (phosphoserine; by PDK1, PDK2, PDK3 and PDK4). Ser-294 is subject to Phosphoserine. A Phosphoserine; by PDK1, PDK2, PDK3 and PDK4 modification is found at Ser-299. Tyr-300 carries the phosphotyrosine modification. Lys-312 carries the post-translational modification N6-acetyllysine; alternate. An N6-succinyllysine; alternate modification is found at Lys-312. Residues Lys-320 and Lys-335 each carry the N6-acetyllysine modification. Residue Lys-384 is modified to N6-succinyllysine.

Heterotetramer of two PDHA1 and two PDHB subunits. The heterotetramer interacts with DLAT, and is part of the multimeric pyruvate dehydrogenase complex that contains multiple copies of pyruvate dehydrogenase (E1), dihydrolipoamide acetyltransferase (DLAT, E2) and lipoamide dehydrogenase (DLD, E3). These subunits are bound to an inner core composed of about 48 DLAT and 12 PDHX molecules. It depends on thiamine diphosphate as a cofactor. Requires Mg(2+) as cofactor. Phosphorylation at Ser-231, Ser-292 and Ser-299 by PDK family kinases inactivates the enzyme; for this phosphorylation at a single site is sufficient. Phosphorylation at Ser-292 interferes with access to active site, and thereby inactivates the enzyme. Dephosphorylation at all three sites, i.e. at Ser-231, Ser-292 and Ser-299, is required for reactivation. In terms of processing, acetylation alters the phosphorylation pattern. Deacetylated by SIRT3.

The protein localises to the mitochondrion matrix. The catalysed reaction is N(6)-[(R)-lipoyl]-L-lysyl-[protein] + pyruvate + H(+) = N(6)-[(R)-S(8)-acetyldihydrolipoyl]-L-lysyl-[protein] + CO2. With respect to regulation, pyruvate dehydrogenase activity is inhibited by phosphorylation of PDHA1; it is reactivated by dephosphorylation. In terms of biological role, the pyruvate dehydrogenase complex catalyzes the overall conversion of pyruvate to acetyl-CoA and CO(2), and thereby links the glycolytic pathway to the tricarboxylic cycle. The polypeptide is Pyruvate dehydrogenase E1 component subunit alpha, somatic form, mitochondrial (PDHA1) (Sus scrofa (Pig)).